A 246-amino-acid polypeptide reads, in one-letter code: Ubiquitin-conjugating enzyme E2 6 (246 aa).

The Cytoplasmic segment spans residues 1-224 (MATKQAQKRL…LEKQHNDKPN (224 aa)). Residues 5–154 (QAQKRLTKEY…FNSTRFKLVF (150 aa)) form the UBC core domain. Cys87 serves as the catalytic Glycyl thioester intermediate. The chain crosses the membrane as a helical span at residues 225-245 (GSSSMFYIGVALFLFLVGLFM).

This sequence belongs to the ubiquitin-conjugating enzyme family.

It is found in the endoplasmic reticulum membrane. It catalyses the reaction S-ubiquitinyl-[E1 ubiquitin-activating enzyme]-L-cysteine + [E2 ubiquitin-conjugating enzyme]-L-cysteine = [E1 ubiquitin-activating enzyme]-L-cysteine + S-ubiquitinyl-[E2 ubiquitin-conjugating enzyme]-L-cysteine.. It functions in the pathway protein modification; protein ubiquitination. Functionally, catalyzes the covalent attachment of ubiquitin to other proteins. Functions in degradation of misfolded or regulated proteins localized in the endoplasmic reticulum (ER) lumen or membrane via the ubiquitin-proteasome system. Cognate E2 conjugating enzyme for the DOA10 ubiquitin ligase complex, which is part of the ERAD-C pathway responsible for the rapid degradation of membrane proteins with misfolded cytoplasmic domains. The protein is Ubiquitin-conjugating enzyme E2 6 (UBC6) of Candida glabrata (strain ATCC 2001 / BCRC 20586 / JCM 3761 / NBRC 0622 / NRRL Y-65 / CBS 138) (Yeast).